Reading from the N-terminus, the 1291-residue chain is DNA-directed RNA polymerase subunit beta' (1291 aa).

Zn(2+) is bound by residues Cys60, Cys62, Cys75, and Cys78. Mg(2+) is bound by residues Asp535, Asp537, and Asp539. 4 residues coordinate Zn(2+): Cys874, Cys951, Cys958, and Cys961.

The protein belongs to the RNA polymerase beta' chain family. As to quaternary structure, the RNAP catalytic core consists of 2 alpha, 1 beta, 1 beta' and 1 omega subunit. When a sigma factor is associated with the core the holoenzyme is formed, which can initiate transcription. Mg(2+) is required as a cofactor. Requires Zn(2+) as cofactor.

It carries out the reaction RNA(n) + a ribonucleoside 5'-triphosphate = RNA(n+1) + diphosphate. In terms of biological role, DNA-dependent RNA polymerase catalyzes the transcription of DNA into RNA using the four ribonucleoside triphosphates as substrates. This is DNA-directed RNA polymerase subunit beta' from Leifsonia xyli subsp. xyli (strain CTCB07).